Reading from the N-terminus, the 198-residue chain is Large ribosomal subunit protein bL21 (198 aa).

This sequence belongs to the bacterial ribosomal protein bL21 family. In terms of assembly, part of the 50S ribosomal subunit. Contacts protein L20.

Its function is as follows. This protein binds to 23S rRNA in the presence of protein L20. This is Large ribosomal subunit protein bL21 from Ruegeria sp. (strain TM1040) (Silicibacter sp.).